We begin with the raw amino-acid sequence, 480 residues long: Beta-glucosidase A (480 aa).

E177 (proton donor) is an active-site residue. Catalysis depends on E378, which acts as the Nucleophile.

Belongs to the glycosyl hydrolase 1 family.

The enzyme catalyses Hydrolysis of terminal, non-reducing beta-D-glucosyl residues with release of beta-D-glucose.. This Enterobacter agglomerans (Erwinia herbicola) protein is Beta-glucosidase A (bglA).